The chain runs to 487 residues: WD repeat, SAM and U-box domain-containing protein 1 (487 aa).

7 WD repeats span residues 10–47, 52–93, 95–134, 137–176, 179–227, 237–276, and 279–318; these read SHRD…ELPF, GHGY…AVLE, PGRS…LRRT, VNDT…LHAE, AHDL…SAGI, GQSA…LLYT, and QHDR…SAQG. The region spanning 347–411 is the SAM domain; that stretch reads WSEEEVLAWL…MKKIEELKMV (65 aa). The U-box domain occupies 416 to 487; that stretch reads GTPDEFLCPI…MAIFRWSTSQ (72 aa).

The sequence is that of WD repeat, SAM and U-box domain-containing protein 1 (wdsub1) from Danio rerio (Zebrafish).